A 232-amino-acid chain; its full sequence is Octanoyltransferase (232 aa).

A BPL/LPL catalytic domain is found at 32 to 219; it reads DTIYDTLILL…SFMVFNFSSC (188 aa). Residues 77–84, 140–142, and 153–155 contribute to the substrate site; these read RGGDITYH, AIG, and GFA. Residue Cys171 is the Acyl-thioester intermediate of the active site.

It belongs to the LipB family.

It is found in the cytoplasm. The catalysed reaction is octanoyl-[ACP] + L-lysyl-[protein] = N(6)-octanoyl-L-lysyl-[protein] + holo-[ACP] + H(+). Its pathway is protein modification; protein lipoylation via endogenous pathway; protein N(6)-(lipoyl)lysine from octanoyl-[acyl-carrier-protein]: step 1/2. In terms of biological role, catalyzes the transfer of endogenously produced octanoic acid from octanoyl-acyl-carrier-protein onto the lipoyl domains of lipoate-dependent enzymes. Lipoyl-ACP can also act as a substrate although octanoyl-ACP is likely to be the physiological substrate. In Dictyoglomus thermophilum (strain ATCC 35947 / DSM 3960 / H-6-12), this protein is Octanoyltransferase.